Here is a 394-residue protein sequence, read N- to C-terminus: Suppressor APC domain-containing protein 2 (394 aa).

Disordered stretches follow at residues 1-23 (MAGA…STEG), 95-125 (LLSA…RLVF), and 150-188 (GPSA…SSSA). Polar residues predominate over residues 177 to 188 (SQSAALEPSSSA). Thr219 carries the post-translational modification Phosphothreonine. Residues 227-277 (GLLKQMKELEQEKEVLLQGLEMMARGRDWYQQQLQRVQERQRRLGQSRASA) adopt a coiled-coil conformation. Residue Ser284 is modified to Phosphoserine. Positions 336–384 (QQQTILMLKEQNRLLTQEVTEKSERITQLEQEKSALIKQLFEARALSQQ) form a coiled coil.

Interacts with a spindle orientation complex at least composed of GNAI1, GPSM2 and NUMA1. Interacts with GPSM2 (via TPR motifs); this interaction is required to prevent GPSM2 anchoring at the mitotic apical cortex and is inhibited in presence of NUMA1 in a dose dependent manner. Interacts with PARD3. Expressed in 5-month-old fetal tissues, including stomach, intestine, colon, liver, brain, lung, heart, spleen and kidney. Undetectable in non-cancerous adult tissues. Expressed in many primary gastric carcinoma, but almost not in adjacent normal mucosa. Expressed preferentially in M and G1 phases, compared to S and G2 phases. Expression is up-regulated in hepatocellular carcinoma (HCC) and colorectal cancer (CRC) tissues (at protein level).

Its subcellular location is the cytoplasm. It localises to the nucleus. The protein resides in the cell cortex. The protein localises to the apical cell membrane. It is found in the cell junction. Its subcellular location is the tight junction. In terms of biological role, plays a role in planar mitotic spindle orientation in retinal progenitor cells (RPCs) and promotes the production of symmetric terminal divisions. Negatively regulates the mitotic apical cortex localization of GPSM2. Involved also in positive regulation of cell proliferation and tumor cell growth. The polypeptide is Suppressor APC domain-containing protein 2 (Homo sapiens (Human)).